The primary structure comprises 493 residues: Beta-amyrin 11-oxidase (493 aa).

A helical membrane pass occupies residues 7–23 (CMSAATLLVCYIFGSKF). Cys439 serves as a coordination point for heme.

It belongs to the cytochrome P450 family. Heme is required as a cofactor. As to expression, expressed in roots and stolons. Not detected in leaves and stems.

It is found in the membrane. The enzyme catalyses beta-amyrin + 2 reduced [NADPH--hemoprotein reductase] + 2 O2 = 11-oxo-beta-amyrin + 2 oxidized [NADPH--hemoprotein reductase] + 3 H2O + 2 H(+). It carries out the reaction beta-amyrin + reduced [NADPH--hemoprotein reductase] + O2 = 11alpha-hydroxy-beta-amyrin + oxidized [NADPH--hemoprotein reductase] + H2O + H(+). It catalyses the reaction 11alpha-hydroxy-beta-amyrin + reduced [NADPH--hemoprotein reductase] + O2 = 11-oxo-beta-amyrin + oxidized [NADPH--hemoprotein reductase] + 2 H2O + H(+). Involved in the biosynthesis of Glycyrrhetinic acid (GA), a natural product which exhibits anti-inflammatory activity. Catalyzes 2 successive oxidations of beta-amyrin, producing a precursor of the triterpene sweetener glycyrrhizin. Unable to use 11-deoxoglycyrrhetinic acid or ent-kaurenoic acid as substrates. The polypeptide is Beta-amyrin 11-oxidase (Glycyrrhiza uralensis (Chinese licorice)).